Reading from the N-terminus, the 175-residue chain is NADH-ubiquinone oxidoreductase chain 6 (175 aa).

6 helical membrane passes run 1 to 21 (MMYI…GFSS), 24 to 44 (SPVY…GIIM), 51 to 71 (LGLV…GYTI), 87 to 107 (VVLS…VWLF), 113 to 133 (LVGF…GSFG), and 148 to 168 (YGFW…FIAI).

The protein belongs to the complex I subunit 6 family. In terms of assembly, core subunit of respiratory chain NADH dehydrogenase (Complex I) which is composed of 45 different subunits.

It localises to the mitochondrion inner membrane. The enzyme catalyses a ubiquinone + NADH + 5 H(+)(in) = a ubiquinol + NAD(+) + 4 H(+)(out). In terms of biological role, core subunit of the mitochondrial membrane respiratory chain NADH dehydrogenase (Complex I) which catalyzes electron transfer from NADH through the respiratory chain, using ubiquinone as an electron acceptor. Essential for the catalytic activity and assembly of complex I. The chain is NADH-ubiquinone oxidoreductase chain 6 (MT-ND6) from Mammuthus primigenius (Siberian woolly mammoth).